The sequence spans 701 residues: MARDLKFTRNIGIAAHIDAGKTTTTERILYYAGVNHKIGEVHEGGATMDWMAQEQERGITITSAATTVGWKYRDNQYHVNIIDTPGHVDFTVEVNRSLRVLDGLVFLFSAVDGVEPQSETNWRLANNYKVARLGFVNKMDRSGADFLNVCKQVKEMLGSNAVPLQLPIGSEDNFQGVVDLVNNRAIVWNEADKGMTFTEVPIPADMVDETLEYREKLLEAVADYDETLMEKFFEDPNSISETEILTALRKAVLDMKIVPMLCGSSFKNKGVQTMLDYVMELLPSPLDKDDLVGINPDTDKEVVRKPVETDPFCALAFKIATDPFVGRLCFVRSYSGLLESGSYVYNTRSGNKERISRIFQMHANKQNQIDRLHCGDIGAVVGFKDIKTGDTLCDEKNKIILESMVFPEPVIGYAIEPKTQADVDKMGVAIAKLVEEDPTLHVHTDQETGQTILRGMGELHLEIIIDRMRREFKVEINQGAPQVAYKESLTKSTEHREVFKKQSGGRGKFADIVFELSPREDDKLGLEFENKIVGGVIPKEFIPSIQKGFEEAMKNGVIAGFPVESMKVRLNHGSFHDVDSDALSFELAARQGFKEAAKNAGAKIMEPIMSVEVVTPEEYTGPVTGDLNRRRGMMKGMDSKMGAQVIKADVPLSELFGYVTDLRTISSGRATASLTFSHYEFVPANLAETIVAKVKGTAVSK.

In terms of domain architecture, tr-type G spans 6–286 (KFTRNIGIAA…YVMELLPSPL (281 aa)). GTP contacts are provided by residues 15-22 (AHIDAGKT), 83-87 (DTPGH), and 137-140 (NKMD).

This sequence belongs to the TRAFAC class translation factor GTPase superfamily. Classic translation factor GTPase family. EF-G/EF-2 subfamily.

It localises to the cytoplasm. Its function is as follows. Catalyzes the GTP-dependent ribosomal translocation step during translation elongation. During this step, the ribosome changes from the pre-translocational (PRE) to the post-translocational (POST) state as the newly formed A-site-bound peptidyl-tRNA and P-site-bound deacylated tRNA move to the P and E sites, respectively. Catalyzes the coordinated movement of the two tRNA molecules, the mRNA and conformational changes in the ribosome. The sequence is that of Elongation factor G from Cytophaga hutchinsonii (strain ATCC 33406 / DSM 1761 / CIP 103989 / NBRC 15051 / NCIMB 9469 / D465).